The chain runs to 141 residues: Small ribosomal subunit protein uS12 (141 aa).

The tract at residues 118–141 (TGVDKRRQQRSAYGAKRPKADKKK) is disordered.

Belongs to the universal ribosomal protein uS12 family. As to quaternary structure, part of the 30S ribosomal subunit. Contacts proteins S8 and S17. May interact with IF1 in the 30S initiation complex.

Its function is as follows. With S4 and S5 plays an important role in translational accuracy. Interacts with and stabilizes bases of the 16S rRNA that are involved in tRNA selection in the A site and with the mRNA backbone. Located at the interface of the 30S and 50S subunits, it traverses the body of the 30S subunit contacting proteins on the other side and probably holding the rRNA structure together. The combined cluster of proteins S8, S12 and S17 appears to hold together the shoulder and platform of the 30S subunit. This is Small ribosomal subunit protein uS12 from Mycoplasmoides gallisepticum (strain R(low / passage 15 / clone 2)) (Mycoplasma gallisepticum).